Reading from the N-terminus, the 438-residue chain is tRNA modification GTPase MnmE (438 aa).

Arginine 20, glutamate 79, and lysine 119 together coordinate (6S)-5-formyl-5,6,7,8-tetrahydrofolate. The 146-residue stretch at 215–360 (GVEVAIVGPP…LEAALAARVG (146 aa)) folds into the TrmE-type G domain. Residues 225-230 (NAGKSS), 244-250 (SDEAGTT), and 269-272 (DTAG) each bind GTP. Residues serine 229 and threonine 250 each coordinate Mg(2+). Position 438 (lysine 438) interacts with (6S)-5-formyl-5,6,7,8-tetrahydrofolate.

Belongs to the TRAFAC class TrmE-Era-EngA-EngB-Septin-like GTPase superfamily. TrmE GTPase family. In terms of assembly, homodimer. Heterotetramer of two MnmE and two MnmG subunits. Requires K(+) as cofactor.

It is found in the cytoplasm. Exhibits a very high intrinsic GTPase hydrolysis rate. Involved in the addition of a carboxymethylaminomethyl (cmnm) group at the wobble position (U34) of certain tRNAs, forming tRNA-cmnm(5)s(2)U34. The protein is tRNA modification GTPase MnmE of Parvibaculum lavamentivorans (strain DS-1 / DSM 13023 / NCIMB 13966).